An 81-amino-acid polypeptide reads, in one-letter code: Putative defensin-like protein 52 (81 aa).

Positions 1-20 are cleaved as a signal peptide; it reads MTFFLVIILAISSSNYNVLA. 2 cysteine pairs are disulfide-bonded: Cys31–Cys55 and Cys41–Cys64.

It belongs to the DEFL family.

The protein resides in the secreted. In Arabidopsis thaliana (Mouse-ear cress), this protein is Putative defensin-like protein 52.